Consider the following 126-residue polypeptide: MTTSSTKTTAQAHGRYIRGSASKVRRVLDQIRGRTYRDALIMLEFMPYRSTEPITKVLRSAVANAENNLGLDPSSLMISTATADMGPPMKRYRPRAQGRAFAIKKQTCHISISVSATQSTNSEDSD.

The protein belongs to the universal ribosomal protein uL22 family. In terms of assembly, part of the 50S ribosomal subunit.

This protein binds specifically to 23S rRNA; its binding is stimulated by other ribosomal proteins, e.g. L4, L17, and L20. It is important during the early stages of 50S assembly. It makes multiple contacts with different domains of the 23S rRNA in the assembled 50S subunit and ribosome. In terms of biological role, the globular domain of the protein is located near the polypeptide exit tunnel on the outside of the subunit, while an extended beta-hairpin is found that lines the wall of the exit tunnel in the center of the 70S ribosome. This Prochlorococcus marinus (strain NATL2A) protein is Large ribosomal subunit protein uL22.